Consider the following 1021-residue polypeptide: Putative 115 kDa protein in type-1 retrotransposable element R1DM (1021 aa).

Positions 479-741 constitute a Reverse transcriptase domain; it reads RCIRLGYFPA…RSCRYLGITV (263 aa). A gag-like cysteine motif region spans residues 955–971; that stretch reads CACGDPYEDWMHILCAC.

This chain is Putative 115 kDa protein in type-1 retrotransposable element R1DM (R1A1-element\ORF2), found in Drosophila melanogaster (Fruit fly).